The primary structure comprises 244 residues: ATP synthase subunit b 2 (244 aa).

Residues 2–22 traverse the membrane as a helical segment; the sequence is TVDWWTIGLQVINVSVLIWLL.

Belongs to the ATPase B chain family. In terms of assembly, F-type ATPases have 2 components, F(1) - the catalytic core - and F(0) - the membrane proton channel. F(1) has five subunits: alpha(3), beta(3), gamma(1), delta(1), epsilon(1). F(0) has three main subunits: a(1), b(2) and c(10-14). The alpha and beta chains form an alternating ring which encloses part of the gamma chain. F(1) is attached to F(0) by a central stalk formed by the gamma and epsilon chains, while a peripheral stalk is formed by the delta and b chains.

It is found in the cell inner membrane. Functionally, f(1)F(0) ATP synthase produces ATP from ADP in the presence of a proton or sodium gradient. F-type ATPases consist of two structural domains, F(1) containing the extramembraneous catalytic core and F(0) containing the membrane proton channel, linked together by a central stalk and a peripheral stalk. During catalysis, ATP synthesis in the catalytic domain of F(1) is coupled via a rotary mechanism of the central stalk subunits to proton translocation. Its function is as follows. Component of the F(0) channel, it forms part of the peripheral stalk, linking F(1) to F(0). In Gluconobacter oxydans (strain 621H) (Gluconobacter suboxydans), this protein is ATP synthase subunit b 2.